Reading from the N-terminus, the 303-residue chain is N-acetyl-D-glucosamine kinase (303 aa).

ATP contacts are provided by residues 4-11 (GFDIGGTK) and 133-140 (GVGGGLIF). Residues His157, Cys177, Cys179, and Cys184 each coordinate Zn(2+).

The protein belongs to the ROK (NagC/XylR) family. NagK subfamily.

The catalysed reaction is N-acetyl-D-glucosamine + ATP = N-acetyl-D-glucosamine 6-phosphate + ADP + H(+). It functions in the pathway cell wall biogenesis; peptidoglycan recycling. Its function is as follows. Catalyzes the phosphorylation of N-acetyl-D-glucosamine (GlcNAc) derived from cell-wall degradation, yielding GlcNAc-6-P. This Escherichia coli O127:H6 (strain E2348/69 / EPEC) protein is N-acetyl-D-glucosamine kinase.